A 222-amino-acid chain; its full sequence is MSHLVKMENGQSQTIQEMLGCIERYNPDHLKTLEAYIQDQAKNNTYDLEANLAVLKLYQFNPHMLNFEITYTILLKSLTNLPHTDFVMAKCLLLPQQMKDENIQTIIDLADILERADFTLFWQRAEVNRTMFRHISGFHDSIRKFVSHVVSITFQTIKKDLLKELLGGIEDSTLESWIKRNGWKHQGQDLIVVAMQDDKIKTKNITEKIEFENVGALMAQCL.

In terms of domain architecture, PCI spans 46–208 (YDLEANLAVL…KIKTKNITEK (163 aa)).

It belongs to the eIF-3 subunit K family. In terms of assembly, component of the eukaryotic translation initiation factor 3 (eIF-3) complex. The eIF-3 complex interacts with pix.

It is found in the cytoplasm. In terms of biological role, component of the eukaryotic translation initiation factor 3 (eIF-3) complex, which is involved in protein synthesis of a specialized repertoire of mRNAs and, together with other initiation factors, stimulates binding of mRNA and methionyl-tRNAi to the 40S ribosome. The eIF-3 complex specifically targets and initiates translation of a subset of mRNAs involved in cell proliferation. This is Eukaryotic translation initiation factor 3 subunit K from Drosophila persimilis (Fruit fly).